The following is a 79-amino-acid chain: Small ribosomal subunit protein bS18 (79 aa).

This sequence belongs to the bacterial ribosomal protein bS18 family. Part of the 30S ribosomal subunit. Forms a tight heterodimer with protein bS6.

Binds as a heterodimer with protein bS6 to the central domain of the 16S rRNA, where it helps stabilize the platform of the 30S subunit. The polypeptide is Small ribosomal subunit protein bS18 (Rhodopseudomonas palustris (strain BisB18)).